The following is a 287-amino-acid chain: Undecaprenyl-diphosphatase (287 aa).

7 consecutive transmembrane segments (helical) span residues 6–26 (LYLIKAFFLGIIEGLTEFIPV), 45–65 (SGKVFEVVIQFGSILAVMWIF), 85–105 (AFTRNLLLAFLPAAVVGAIFI), 111–131 (VFYHPGVVAVTLVLGGLIMLW), 204–224 (ATEFSFFLAMPTMLGAATYDL), 238–258 (AIAVGFAAAFISALVVVRAVL), and 265–285 (TYRGFAWYRIALGIVVAAWLM).

It belongs to the UppP family.

It localises to the cell inner membrane. It carries out the reaction di-trans,octa-cis-undecaprenyl diphosphate + H2O = di-trans,octa-cis-undecaprenyl phosphate + phosphate + H(+). Functionally, catalyzes the dephosphorylation of undecaprenyl diphosphate (UPP). Confers resistance to bacitracin. The sequence is that of Undecaprenyl-diphosphatase from Bordetella petrii (strain ATCC BAA-461 / DSM 12804 / CCUG 43448).